A 223-amino-acid chain; its full sequence is Urease accessory protein UreF (223 aa).

This sequence belongs to the UreF family. In terms of assembly, ureD, UreF and UreG form a complex that acts as a GTP-hydrolysis-dependent molecular chaperone, activating the urease apoprotein by helping to assemble the nickel containing metallocenter of UreC. The UreE protein probably delivers the nickel.

The protein localises to the cytoplasm. In terms of biological role, required for maturation of urease via the functional incorporation of the urease nickel metallocenter. This Rhizobium johnstonii (strain DSM 114642 / LMG 32736 / 3841) (Rhizobium leguminosarum bv. viciae) protein is Urease accessory protein UreF.